The following is a 204-amino-acid chain: SOSS complex subunit B homolog (204 aa).

The segment at residues 24 to 94 (IVLEVGVATV…TLYSGKNGEV (71 aa)) is a DNA-binding region (OB). Residues 115–204 (RAEQQAVANP…GRGGLKGERR (90 aa)) are disordered. Composition is skewed to low complexity over residues 122-131 (ANPAATPAGL) and 139-183 (GLPA…QTTT). Over residues 187 to 198 (TRGGRGGGGRGG) the composition is skewed to gly residues.

Belongs to the SOSS-B family.

The sequence is that of SOSS complex subunit B homolog from Drosophila melanogaster (Fruit fly).